The following is a 264-amino-acid chain: ATP synthase subunit a (264 aa).

Helical transmembrane passes span 29-49 (TWHI…LWIF), 90-110 (IAPL…MDMI), 111-131 (PVDW…KVVP), 134-154 (DVNI…YYSI), 177-197 (IPVN…SLAL), 208-228 (LIFI…TLGV), and 235-255 (LIFH…LTIV).

This sequence belongs to the ATPase A chain family. In terms of assembly, F-type ATPases have 2 components, CF(1) - the catalytic core - and CF(0) - the membrane proton channel. CF(1) has five subunits: alpha(3), beta(3), gamma(1), delta(1), epsilon(1). CF(0) has three main subunits: a(1), b(2) and c(9-12). The alpha and beta chains form an alternating ring which encloses part of the gamma chain. CF(1) is attached to CF(0) by a central stalk formed by the gamma and epsilon chains, while a peripheral stalk is formed by the delta and b chains.

Its subcellular location is the cell inner membrane. In terms of biological role, key component of the proton channel; it plays a direct role in the translocation of protons across the membrane. The polypeptide is ATP synthase subunit a (Shewanella denitrificans (strain OS217 / ATCC BAA-1090 / DSM 15013)).